Here is a 118-residue protein sequence, read N- to C-terminus: Small ribosomal subunit protein uS13 (118 aa).

Positions 94–118 are disordered; the sequence is GLPLRGQRTKTNARTRKGRRKGTSS.

Belongs to the universal ribosomal protein uS13 family. As to quaternary structure, part of the 30S ribosomal subunit. Forms a loose heterodimer with protein S19. Forms two bridges to the 50S subunit in the 70S ribosome.

In terms of biological role, located at the top of the head of the 30S subunit, it contacts several helices of the 16S rRNA. In the 70S ribosome it contacts the 23S rRNA (bridge B1a) and protein L5 of the 50S subunit (bridge B1b), connecting the 2 subunits; these bridges are implicated in subunit movement. Contacts the tRNAs in the A and P-sites. This is Small ribosomal subunit protein uS13 from Legionella pneumophila (strain Paris).